The chain runs to 101 residues: Ubiquitin-related modifier 1 homolog (101 aa).

Gly101 is modified (1-thioglycine). A Glycyl lysine isopeptide (Gly-Lys) (interchain with K-? in acceptor proteins) cross-link involves residue Gly101.

It belongs to the URM1 family. As to quaternary structure, interacts with cer. C-terminal thiocarboxylation occurs in 2 steps, it is first acyl-adenylated (-COAMP) via the hesA/moeB/thiF part of the MOCS3 homolog, then thiocarboxylated (-COSH) via the rhodanese domain of the MOCS3 homolog.

It localises to the cytoplasm. It participates in tRNA modification; 5-methoxycarbonylmethyl-2-thiouridine-tRNA biosynthesis. In terms of biological role, acts as a sulfur carrier required for 2-thiolation of mcm(5)S(2)U at tRNA wobble positions of cytosolic tRNA(Lys), tRNA(Glu) and tRNA(Gln). Serves as sulfur donor in tRNA 2-thiolation reaction by being thiocarboxylated (-COSH) at its C-terminus by MOCS3. The sulfur is then transferred to tRNA to form 2-thiolation of mcm(5)S(2)U. Also acts as a ubiquitin-like protein (UBL) that is covalently conjugated via an isopeptide bond to lysine residues of target proteins such as Prx2/Jafrac1, Ciao1, Eip71CD and GILT1. The thiocarboxylated form serves as substrate for conjugation and oxidative stress specifically induces the formation of UBL-protein conjugates. This is Ubiquitin-related modifier 1 homolog from Drosophila simulans (Fruit fly).